The chain runs to 60 residues: Large ribosomal subunit protein bL32 (60 aa).

This sequence belongs to the bacterial ribosomal protein bL32 family.

This Clostridium novyi (strain NT) protein is Large ribosomal subunit protein bL32.